A 174-amino-acid chain; its full sequence is MKVMTQFHERLRAQAETSQLAIRWRGLPARDRLALLWLGAFLLLVVLYLALWRPAERHLQSARQYFTEQRALHAYIQQQAPNVRQADAAAPQAQIDPAALQGMVTASAAQAGLSVERLDNEGEGAVQVALQPAPFAKLLPWLEQLNGQGVQVAEAGLDRQVDGRVSARLSLRVE.

Residues 1-32 lie on the Cytoplasmic side of the membrane; it reads MKVMTQFHERLRAQAETSQLAIRWRGLPARDR. A helical membrane pass occupies residues 33–52; sequence LALLWLGAFLLLVVLYLALW. At 53 to 174 the chain is on the periplasmic side; it reads RPAERHLQSA…VSARLSLRVE (122 aa).

The protein belongs to the GSP M family. In terms of assembly, type II secretion system is composed of four main components: the outer membrane complex, the inner membrane complex, the cytoplasmic secretion ATPase and the periplasm-spanning pseudopilus. Forms homodimers. Interacts with XcpY/GspL. Interacts with XcpR/GspE and XcpS/GspF.

It localises to the cell inner membrane. Its function is as follows. Inner membrane component of the type II secretion system required for the energy-dependent secretion of extracellular factors such as proteases and toxins from the periplasm. Plays a role in the complex assembly and recruits XcpY resulting in a stable complex in the inner membrane. Provides thus a link between the energy-providing XcpR protein in the cytoplasm and the rest of the T2SS machinery. This is Type II secretion system protein M (xcpZ) from Pseudomonas aeruginosa (strain ATCC 15692 / DSM 22644 / CIP 104116 / JCM 14847 / LMG 12228 / 1C / PRS 101 / PAO1).